A 60-amino-acid polypeptide reads, in one-letter code: Movement protein TGBp3 (60 aa).

The Lumenal portion of the chain corresponds to 1–6; that stretch reads MHYIDW. Residues 7–23 traverse the membrane as a helical segment; sequence VILLTFAAALIVCLTPK. At 24–60 the chain is on the cytoplasmic side; sequence PEPCIITVSGASATVSNCPNPELLTDLVKALKPAKPV.

This sequence belongs to the Tymovirales TGBp3 protein family.

The protein resides in the host endoplasmic reticulum membrane. In terms of biological role, plays a role in viral cell-to-cell propagation, by facilitating genome transport to neighboring plant cells through plasmosdesmata. May induce the formation of granular vesicles derived from the Endoplasmic reticulum, which align on actin filaments. The protein is Movement protein TGBp3 of Citrus (ICRSV).